The sequence spans 298 residues: Mitochondrial dicarboxylate/tricarboxylate transporter DTC (298 aa).

Solcar repeat units lie at residues 12–93 (WTTV…LTAK), 103–194 (LPLY…SAEY), and 202–292 (GEMS…ITKF). Helical transmembrane passes span 18–38 (FVNG…IDMI), 68–88 (GLSA…GSFK), 109–129 (ALCG…ADLA), 169–189 (GCGP…ASYD), 208–228 (VGAS…FDFV), and 268–288 (FPVY…FLNQ).

It belongs to the mitochondrial carrier (TC 2.A.29) family. In terms of tissue distribution, highly expressed in flower buds and at lower levels in roots, leaves and stems.

It localises to the mitochondrion inner membrane. Functionally, catalyzes the transport of dicarboxylates, such as oxoglutarate, oxaloacetate, malate, and succinate, and of tricarboxylates, such as citrate, isocitrate, cis-aconitate, and trans-aconitate by a counter-exchange mechanism across the inner mitochondrial membrane. Substrate preference in reconstituted proteoliposomes is oxaloacetate &gt; malonate &gt; malate &gt; maleate &gt; succinate &gt; oxoglutarate &gt; citrate &gt; trans-aconitate &gt; cis-aconitate &gt; sulfate &gt; isocitrate. May be important for plant metabolic functions requiring organic acid flux to or from the mitochondria, such as nitrogen assimilation, export of reducing equivalents from the mitochondria, and fatty acid elongation. The protein is Mitochondrial dicarboxylate/tricarboxylate transporter DTC (DTC) of Arabidopsis thaliana (Mouse-ear cress).